The primary structure comprises 191 residues: NF-kappa-B inhibitor-interacting Ras-like protein 2 (191 aa).

Positions 1–191 (MGKSCKVVVC…KNKGSGSLDG (191 aa)) are small GTPase-like. Position 11 to 18 (11 to 18 (GQASVGKT)) interacts with GTP. The Effector region signature appears at 35–43 (MIETQEDIY). Residues 61-65 (DTRGL) and 120-123 (NKCD) each bind GTP. The interval 169-191 (TQPQSKSAFPLSRKNKGSGSLDG) is disordered.

This sequence belongs to the small GTPase superfamily. Ras family. KappaB-Ras subfamily. In terms of assembly, interacts with both NF-kappa-B inhibitor alpha (NFKBIA) and beta (NFKBIB) in vitro. However, it probably only interacts with NFKBIB in vivo. Interacts with GFOD1.

The protein localises to the cytoplasm. Functionally, atypical Ras-like protein that acts as a potent regulator of NF-kappa-B activity by preventing the degradation of NF-kappa-B inhibitor beta (NFKBIB) by most signals, explaining why NFKBIB is more resistant to degradation. May act by blocking phosphorylation of NFKBIB and nuclear localization of p65/RELA NF-kappa-B subunit. It is unclear whether it acts as a GTPase. Both GTP- and GDP-bound forms block phosphorylation of NFKBIB. The chain is NF-kappa-B inhibitor-interacting Ras-like protein 2 (Nkiras2) from Mus musculus (Mouse).